Here is a 592-residue protein sequence, read N- to C-terminus: MAPGQLALFSVSDKTGLVEFARNLTALGLNLVASGGTAKALRDAGLAVRDVSELTGFPEMLGGRVKTLHPAVHAGILARNIPEDNADMARLDFNLIRVVACNLYPFVKTVASPGVTVEEAVEQIDIGGVTLLRAAAKNHARVTVVCEPEDYVVVSTEMQSSESKDTSLETRRQLALKAFTHTAQYDEAISDYFRKQYSKGVSQMPLRYGMNPHQTPAQLYTLQPKLPITVLNGAPGFINLCDALNAWQLVKELKEALGIPAAASFKHVSPAGAAVGIPLSEDEAKVCMVYDLYKTLTPISAAYARARGADRMSSFGDFVALSDVCDVPTAKIISREVSDGIIAPGYEEEALTILSKKKNGNYCVLQMDQSYKPDENEVRTLFGLHLSQKRNNGVVDKSLFSNVVTKNKDLPESALRDLIVATIAVKYTQSNSVCYAKNGQVIGIGAGQQSRIHCTRLAGDKANYWWLRHHPQVLSMKFKTGVKRAEISNAIDQYVTGTIGEDEDLIKWKALFEEVPELLTEAEKKEWVEKLTEVSISSDAFFPFRDNVDRAKRSGVAYIAAPSGSAADKVVIEACDELGIILAHTNLRLFHH.

Met-1 is modified (N-acetylmethionine). The MGS-like domain occupies 2–146; sequence APGQLALFSV…KNHARVTVVC (145 aa). The segment at 2 to 198 is IMP cyclohydrolase; sequence APGQLALFSV…ISDYFRKQYS (197 aa). Residues 12–14, 34–37, 64–67, 101–102, and 125–126 each bind IMP; these read SDK, SGGT, RVKT, CN, and DI. Lys-137 serves as the catalytic Proton donor/acceptor; for FAICAR cyclization activity. An N6-acetyllysine modification is found at Lys-199. The AICAR formyltransferase stretch occupies residues 199-592; the sequence is KGVSQMPLRY…AHTNLRLFHH (394 aa). 5-amino-1-(5-phospho-beta-D-ribosyl)imidazole-4-carboxamide is bound by residues 207 to 208, His-267, Gly-316, Asp-339, Asn-431, and Arg-451; that span reads RY. His-267 (proton acceptor; for AICAR formyltransferase activity) is an active-site residue. Ile-452 provides a ligand contact to (6R)-10-formyltetrahydrofolate. Phe-541 serves as a coordination point for 5-amino-1-(5-phospho-beta-D-ribosyl)imidazole-4-carboxamide. (6R)-10-formyltetrahydrofolate-binding positions include Asp-546 and 565-566; that span reads SA. Arg-588 contributes to the 5-amino-1-(5-phospho-beta-D-ribosyl)imidazole-4-carboxamide binding site.

The protein belongs to the PurH family. Homodimer. Associates with internalized INSR complexes on Golgi/endosomal membranes. Interacts with INSR; ATIC together with PRKAA2/AMPK2 and HACD3/PTPLAD1 is proposed to be part of a signaling network regulating INSR autophosphorylation and endocytosis. Present in the heart, brain, placenta, lung, liver, skeletal muscle, kidney, pancreas.

The protein localises to the cytoplasm. It is found in the cytosol. The catalysed reaction is (6R)-10-formyltetrahydrofolate + 5-amino-1-(5-phospho-beta-D-ribosyl)imidazole-4-carboxamide = 5-formamido-1-(5-phospho-D-ribosyl)imidazole-4-carboxamide + (6S)-5,6,7,8-tetrahydrofolate. The enzyme catalyses 10-formyldihydrofolate + 5-amino-1-(5-phospho-beta-D-ribosyl)imidazole-4-carboxamide = 5-formamido-1-(5-phospho-D-ribosyl)imidazole-4-carboxamide + 7,8-dihydrofolate. It catalyses the reaction IMP + H2O = 5-formamido-1-(5-phospho-D-ribosyl)imidazole-4-carboxamide. It carries out the reaction 5-amino-1-(5-phospho-D-ribosyl)imidazole-4-thiocarboxamide + 10-formyldihydrofolate = 6-thio-IMP + 7,8-dihydrofolate + H2O. It functions in the pathway purine metabolism; IMP biosynthesis via de novo pathway; 5-formamido-1-(5-phospho-D-ribosyl)imidazole-4-carboxamide from 5-amino-1-(5-phospho-D-ribosyl)imidazole-4-carboxamide (10-formyl THF route): step 1/1. It participates in purine metabolism; IMP biosynthesis via de novo pathway; IMP from 5-formamido-1-(5-phospho-D-ribosyl)imidazole-4-carboxamide: step 1/1. With respect to regulation, AMP and XMP inhibit AICAR formyltransferase activity. AICAR formyltransferase activity is inhibited by N-(6-fluoro-1-oxo-1,2-dihydroisoquinolin-7-yl)-5- [(3R)-3-hydroxypyrrolidin-1-yl]thiophene-2-sulfonamide (LSN 3213128), which acts as a tumor suppression in cancer cell lines. In terms of biological role, bifunctional enzyme that catalyzes the last two steps of purine biosynthesis. Acts as a transformylase that incorporates a formyl group to the AMP analog AICAR (5-amino-1-(5-phospho-beta-D-ribosyl)imidazole-4-carboxamide) to produce the intermediate formyl-AICAR (FAICAR). Can use both 10-formyldihydrofolate and 10-formyltetrahydrofolate as the formyl donor in this reaction. Also catalyzes the cyclization of FAICAR to inosine monophosphate (IMP). Is able to convert thio-AICAR to 6-mercaptopurine ribonucleotide, an inhibitor of purine biosynthesis used in the treatment of human leukemias. Promotes insulin receptor/INSR autophosphorylation and is involved in INSR internalization. The sequence is that of Bifunctional purine biosynthesis protein ATIC from Homo sapiens (Human).